Consider the following 30-residue polypeptide: Cyclotide cter-O (30 aa).

Positions 1-30 (GIPCGESCVFIPCITGIAGCSCKSKVCYRN) form a cross-link, cyclopeptide (Gly-Asn). 3 cysteine pairs are disulfide-bonded: cysteine 4–cysteine 20, cysteine 8–cysteine 22, and cysteine 13–cysteine 27.

This is a cyclic peptide.

It is found in the secreted. Its function is as follows. Probably participates in a plant defense mechanism. This is Cyclotide cter-O from Clitoria ternatea (Butterfly pea).